We begin with the raw amino-acid sequence, 243 residues long: Uridylate kinase (243 aa).

An ATP-binding site is contributed by 15 to 18; the sequence is KLSG. An involved in allosteric activation by GTP region spans residues 23 to 28; it reads GEEGFG. Glycine 57 is a UMP binding site. Residues glycine 58 and arginine 62 each coordinate ATP. Residues aspartate 77 and 138 to 145 each bind UMP; that span reads TGNPFFTT. Threonine 165, phenylalanine 171, and aspartate 174 together coordinate ATP.

The protein belongs to the UMP kinase family. As to quaternary structure, homohexamer.

It is found in the cytoplasm. It carries out the reaction UMP + ATP = UDP + ADP. It participates in pyrimidine metabolism; CTP biosynthesis via de novo pathway; UDP from UMP (UMPK route): step 1/1. Allosterically activated by GTP. Inhibited by UTP. Catalyzes the reversible phosphorylation of UMP to UDP. This is Uridylate kinase from Vibrio campbellii (strain ATCC BAA-1116).